We begin with the raw amino-acid sequence, 418 residues long: Thyroid hormone receptor alpha (418 aa).

Residues 1-41 are disordered; sequence MDQNLSGLDCLSEPDEKRWPDGKRKRKNSQCMGKSGMSGDS. The segment at 1–60 is modulating; sequence MDQNLSGLDCLSEPDEKRWPDGKRKRKNSQCMGKSGMSGDSSVSLLSAGYIPSYLTKDEP. Zn(2+) is bound by residues C61, C64, C78, C81, C99, C105, C115, and C118. NR C4-type zinc fingers lie at residues 61–81 and 99–123; these read CVVCSDKATGYHYRCITCEGC and CKYDGCCIIDKITRNQCQLCRFKKC. Positions 61–135 form a DNA-binding region, nuclear receptor; that stretch reads CVVCSDKATG…VGMAMDLVLD (75 aa). The NR LBD domain occupies 171 to 415; that stretch reads EEWELIRIVT…PPLFLEVFED (245 aa). Positions 236 and 285 each coordinate 3,3',5-triiodo-L-thyronine.

This sequence belongs to the nuclear hormone receptor family. NR1 subfamily. Highest level of expression in erythrocytes. Also expressed in liver, tail, eye, muscle and skin.

It localises to the nucleus. Its function is as follows. Nuclear hormone receptor that can act as a repressor or activator of transcription. High affinity receptor for thyroid hormones, including triiodothyronine and thyroxine. In Aquarana catesbeiana (American bullfrog), this protein is Thyroid hormone receptor alpha (thra).